An 83-amino-acid polypeptide reads, in one-letter code: U3-theraphotoxin-Cg1a (83 aa).

The signal sequence occupies residues 1 to 23; it reads MRTFTLIAILTCAVLVIFHAAAA. Residues 24 to 44 constitute a propeptide that is removed on maturation; the sequence is EELEAQDVIETEALATLDEER. Intrachain disulfides connect cysteine 48–cysteine 61, cysteine 52–cysteine 75, and cysteine 69–cysteine 80.

This sequence belongs to the neurotoxin 12 (Hwtx-2) family. 03 (juruin) subfamily. Post-translationally, contains 3 disulfide bonds. Two different connectivities are observed in similar proteins (C1-C3, C2-C5, C4-C6 or C1-C4, C2-C5, C3-C6). In terms of tissue distribution, expressed by the venom gland.

The protein localises to the secreted. Probable ion channel inhibitor. This Chilobrachys guangxiensis (Chinese earth tiger tarantula) protein is U3-theraphotoxin-Cg1a.